Here is a 237-residue protein sequence, read N- to C-terminus: Ribosomal RNA small subunit methyltransferase G (237 aa).

S-adenosyl-L-methionine-binding positions include glycine 76, phenylalanine 81, 128–129 (VE), and arginine 147.

It belongs to the methyltransferase superfamily. RNA methyltransferase RsmG family.

It is found in the cytoplasm. Functionally, specifically methylates the N7 position of a guanine in 16S rRNA. The protein is Ribosomal RNA small subunit methyltransferase G of Prochlorococcus marinus (strain AS9601).